A 468-amino-acid chain; its full sequence is Alpha-2A adrenergic receptor (468 aa).

Residues 1-48 are Extracellular-facing; it reads MFRQEQPLAEGSFAPMGSLQPDAGNASWNGTEAPGGGARATPYSLQVT. N-linked (GlcNAc...) asparagine glycans are attached at residues Asn25 and Asn29. Residues 49–74 traverse the membrane as a helical segment; the sequence is LTLVCLAGLLMLFTVFGNVLVIIAVF. Residues 75–85 are Cytoplasmic-facing; that stretch reads TSRALKAPQNL. A helical transmembrane segment spans residues 86-111; the sequence is FLVSLASADILVATLVIPFSLANEVM. The Extracellular segment spans residues 112-121; the sequence is GYWYFGKAWC. Cys121 and Cys203 are joined by a disulfide. The chain crosses the membrane as a helical span at residues 122–144; sequence EIYLALDVLFCTSSIVHLCAISL. Residues 145–164 are Cytoplasmic-facing; the sequence is DRYWSITQAIEYNLKRTPRR. Residues 165 to 188 form a helical membrane-spanning segment; that stretch reads IKAIIVTVWVISAVISFPPLISFE. Over 189-207 the chain is Extracellular; it reads KKRGRSGQPSAEPRCEIND. A helical transmembrane segment spans residues 208–232; the sequence is QKWYVISSSIGSFFAPCLIMILVYV. The Cytoplasmic segment spans residues 233–392; it reads RIYQIAKRRT…RQNREKRFTF (160 aa). 2 disordered regions span residues 242 to 279 and 291 to 381; these read TRVPPSRRGPDATAAELPGSAERRPNGLGPERGGVGPV and NGAP…SRWR. Basic and acidic residues predominate over residues 315–332; the sequence is SSEHAERPPGSRRSERGP. Phosphoserine is present on Ser348. Residues 351 to 366 show a composition bias toward low complexity; it reads RRGPGATGLGAPTAGP. Position 370 is an omega-N-methylarginine (Arg370). A helical membrane pass occupies residues 393–417; it reads VLAVVIGVFVVCWFPFFFTYTLTAI. Residues 418–427 are Extracellular-facing; the sequence is GCPVPPTLFK. Residues 428-448 form a helical membrane-spanning segment; that stretch reads FFFWFGYCNSSLNPVIYTIFN. Over 449-468 the chain is Cytoplasmic; sequence HDFRRAFKKILCRGDRKRIV. Cys460 carries the S-palmitoyl cysteine lipid modification.

Belongs to the G-protein coupled receptor 1 family. Adrenergic receptor subfamily. ADRA2A sub-subfamily. Component of the ADA2A-containing complex (ATAC), composed of KAT14, KAT2A, TADA2L, TADA3L, ZZ3, MBIP, WDR5, YEATS2, CCDC101 and DR1. As to expression, retina, brain and olfactory lobe.

It is found in the cell membrane. In terms of biological role, alpha-2 adrenergic receptors mediate the catecholamine-induced inhibition of adenylate cyclase through the action of G proteins. Component of the ATAC complex, a complex with histone acetyltransferase activity on histones H3 and H4. The chain is Alpha-2A adrenergic receptor from Bos taurus (Bovine).